The primary structure comprises 602 residues: NAD-reducing hydrogenase HoxS subunit alpha (602 aa).

219–228 is an NAD(+) binding site; sequence GRGGAGFSTG. 332 to 379 contacts FMN; that stretch reads GAGAYICGDESALIESCEGKRGTPRVKPPFPVQQGYLGKPTSVNNVET. [4Fe-4S] cluster-binding residues include C499, C502, C505, and C545.

Belongs to the complex I 51 kDa subunit family. In terms of assembly, tetramer of an alpha and a gamma subunits (flavin-containing dimer), and a delta and a nickel-containing beta subunit (hydrogenase dimer). The cofactor is FMN. [4Fe-4S] cluster is required as a cofactor.

Its subcellular location is the cytoplasm. The enzyme catalyses H2 + NAD(+) = NADH + H(+). Functionally, subunits alpha and gamma of HoxS constitute an NADH--oxidoreductase. The sequence is that of NAD-reducing hydrogenase HoxS subunit alpha (hoxF) from Cupriavidus necator (strain ATCC 17699 / DSM 428 / KCTC 22496 / NCIMB 10442 / H16 / Stanier 337) (Ralstonia eutropha).